Consider the following 197-residue polypeptide: MLERIKDSFTESIQTKIDASEALPESIAKAAEMMVQCLLGGNKILACGNGGSAGDAQHFSAELLNRYEIERPPLPAIALSCDTSTITAIANDYSYDEIYSKQIMALGQPGDILLAISTSGNSGNVIKAMEAALSRDMTIVSLTGKDGGAMAGLLSVNDVEIRVPSNVTARIQEVHLLAIHCLCDNIDRTLFPQDEQA.

Positions 34–196 constitute an SIS domain; that stretch reads MVQCLLGGNK…DRTLFPQDEQ (163 aa). 49-51 is a substrate binding site; it reads NGG. Zn(2+)-binding residues include His-58 and Glu-62. Residues Glu-62, 91-92, 117-119, Ser-122, and Gln-172 contribute to the substrate site; these read ND and STS. Zn(2+) contacts are provided by Gln-172 and His-180.

It belongs to the SIS family. GmhA subfamily. As to quaternary structure, homotetramer. Requires Zn(2+) as cofactor.

The protein resides in the cytoplasm. The enzyme catalyses 2 D-sedoheptulose 7-phosphate = D-glycero-alpha-D-manno-heptose 7-phosphate + D-glycero-beta-D-manno-heptose 7-phosphate. It participates in carbohydrate biosynthesis; D-glycero-D-manno-heptose 7-phosphate biosynthesis; D-glycero-alpha-D-manno-heptose 7-phosphate and D-glycero-beta-D-manno-heptose 7-phosphate from sedoheptulose 7-phosphate: step 1/1. Functionally, catalyzes the isomerization of sedoheptulose 7-phosphate in D-glycero-D-manno-heptose 7-phosphate. The chain is Phosphoheptose isomerase from Shewanella piezotolerans (strain WP3 / JCM 13877).